The following is a 299-amino-acid chain: Prohibitin-2 (299 aa).

An N-acetylalanine modification is found at A2. Positions 19–49 (MGTALKLLLGAGAVAYGVRESVFTVEGGHRA) are necessary for transcriptional repression. Position 128 is a phosphotyrosine (Y128). K147 bears the N6-acetyllysine mark. Residues 150–174 (ASQLITQRAQVSLLIRRELTERAKD) form a necessary for transcriptional repression region. A Phosphoserine modification is found at S151. The stretch at 190-238 (SREYTAAVEAKQVAQQEAQRAQFLVEKAKQEQRQKIVQAEGEAEAAKML) forms a coiled coil. An N6-acetyllysine mark is found at K200, K236, K250, and K262.

This sequence belongs to the prohibitin family. The mitochondrial prohibitin complex consists of two subunits (PHB1 and PHB2), assembled into a membrane-associated ring-shaped supercomplex of approximately 1 mDa. Interacts with ESR1, HDAC1 and HDAC5. Interacts with ZNF703. Interacts with STOML2. Interacts with ARFGEF3. Interacts with SPHK2. Interacts with COX4I1; the interaction associates PHB2 with COX. Interacts with MAP1LC3B (membrane-bound form LC3-II); the interaction is direct and upon mitochondrial depolarization and proteasome-dependent outer membrane rupture. Interacts with IGFBP6 (via C-terminal domain). Interacts with CLPB. Interacts with CD86 (via cytoplasmic domain); the interactions increases after priming with CD40. Interacts with AFG3L2. Interacts with DNAJC19. Interacts with AKT2; this interaction may be important for myogenic differentiation. In terms of processing, phosphorylated. Tyrosine phosphorylation is indirectly stimulated by IGFBP6.

It is found in the mitochondrion inner membrane. Its subcellular location is the cytoplasm. It localises to the nucleus. The protein resides in the cell membrane. Protein with pleiotropic attributes mediated in a cell-compartment- and tissue-specific manner, which include the plasma membrane-associated cell signaling functions, mitochondrial chaperone, and transcriptional co-regulator of transcription factors and sex steroid hormones in the nucleus. In terms of biological role, in the mitochondria, together with PHB, forms large ring complexes (prohibitin complexes) in the inner mitochondrial membrane (IMM) and functions as a chaperone protein that stabilizes mitochondrial respiratory enzymes and maintains mitochondrial integrity in the IMM, which is required for mitochondrial morphogenesis, neuronal survival, and normal lifespan. The prohibitin complex, with DNAJC19, regulates cardiolipin remodeling and the protein turnover of OMA1 in a cardiolipin-binding manner. Also regulates cytochrome-c oxidase assembly (COX) and mitochondrial respiration. Binding to sphingoid 1-phosphate (SPP) modulates its regulator activity. Has a key role of mitophagy receptor involved in targeting mitochondria for autophagic degradation. Involved in mitochondrial-mediated antiviral innate immunity, activates RIG-I-mediated signal transduction and production of IFNB1 and pro-inflammatory cytokine IL6. Functionally, in the nucleus, serves as transcriptional co-regulator. Acts as a mediator of transcriptional repression by nuclear hormone receptors via recruitment of histone deacetylases. Functions as an estrogen receptor (ER)-selective coregulator that potentiates the inhibitory activities of antiestrogens and represses the activity of estrogens. Competes with NCOA1 for modulation of ER transcriptional activity. Its function is as follows. In the plasma membrane, is involved in IGFBP6-induced cell migration. Cooperates with CD86 to mediate CD86-signaling in B lymphocytes that regulates the level of IgG1 produced through the activation of distal signaling intermediates. Upon CD40 engagement, required to activate NF-kappa-B signaling pathway via phospholipase C and protein kinase C activation. The polypeptide is Prohibitin-2 (Rattus norvegicus (Rat)).